A 126-amino-acid chain; its full sequence is Small ribosomal subunit protein uS12 (126 aa).

The tract at residues 1–23 (MPTISQLVRKGRKTVASKSTAPA) is disordered. 3-methylthioaspartic acid is present on Asp-89.

This sequence belongs to the universal ribosomal protein uS12 family. Part of the 30S ribosomal subunit. Contacts proteins S8 and S17. May interact with IF1 in the 30S initiation complex.

With S4 and S5 plays an important role in translational accuracy. Functionally, interacts with and stabilizes bases of the 16S rRNA that are involved in tRNA selection in the A site and with the mRNA backbone. Located at the interface of the 30S and 50S subunits, it traverses the body of the 30S subunit contacting proteins on the other side and probably holding the rRNA structure together. The combined cluster of proteins S8, S12 and S17 appears to hold together the shoulder and platform of the 30S subunit. This chain is Small ribosomal subunit protein uS12, found in Clostridium perfringens (strain ATCC 13124 / DSM 756 / JCM 1290 / NCIMB 6125 / NCTC 8237 / Type A).